The sequence spans 1215 residues: Cellulose synthase-like protein D4 (1215 aa).

Disordered stretches follow at residues 24-46 (GGDA…SLGS) and 206-231 (SDTD…ERDQ). Positions 207–222 (DTDESDSVTDDDDDEA) are enriched in acidic residues. The next 2 helical transmembrane spans lie at 321-341 (AILS…GFFL) and 352-372 (AVWL…SWLL). Catalysis depends on residues Asp452 and Asp905. 6 consecutive transmembrane segments (helical) span residues 988–1008 (VFLL…KFIV), 1014–1034 (TFLA…LLEI), 1060–1080 (PAAV…SFTL), 1114–1134 (LMVP…VAAA), 1147–1167 (LLGG…FAKG), and 1177–1197 (TIVF…WVYI).

The protein belongs to the glycosyltransferase 2 family. Plant cellulose synthase-like D subfamily.

The protein resides in the golgi apparatus membrane. In terms of biological role, thought to be a Golgi-localized beta-glycan synthase that polymerize the backbones of noncellulosic polysaccharides (hemicelluloses) of plant cell wall. The protein is Cellulose synthase-like protein D4 (CSLD4) of Oryza sativa subsp. japonica (Rice).